Consider the following 476-residue polypeptide: MDLVIGGKFKLGKKIGSGSFGELYLGVNVQTGEEVAVKLENVKTKHPQLHYESKLYMLLQGGSGIPNIKWFGVEGDYSVMVIDLLGPSLEDLFNYCNRKLTLKTVLMLADQLLNRVEFMHTRGFLHRDIKPDNFLMGLGRKANQVYIIDFGLGKKYRDLQTHKHIPYRENKNLTGTARYASVNTHLGVEQSRRDDLESLGYVLMYFLKGSLPWQGLKAGTKKQKYDRISEKKVSTPIEVLCKNQPSEFVSYFHYCRSLRFDDKPDYSYLKRLFRDLFIREGYQFDYVFDWTVLKYPQIGSSSGSSSRTRHHTTAKPGFNADPIERQERILGKETTRYKIPGAVEAFSRRHPTTTSSPRDRSRSRNSDDGPFSKQTHGDSERANSSSRYRASSSRKAVAASSSRPSSAGGPSESRTSSRLVSSSGGGGSGSGNGRPSTSQRVQAGYESKTLSFSRATAARNTREDQLRSFELLSLRK.

Residues 9–278 (FKLGKKIGSG…LKRLFRDLFI (270 aa)) form the Protein kinase domain. Residues 15-23 (IGSGSFGEL) and Lys38 each bind ATP. The active-site Proton acceptor is Asp128. Disordered stretches follow at residues 299 to 324 (GSSSGSSSRTRHHTTAKPGFNADPIE) and 340 to 464 (PGAV…TRED). Basic and acidic residues predominate over residues 357-367 (PRDRSRSRNSD). Over residues 382–422 (ANSSSRYRASSSRKAVAASSSRPSSAGGPSESRTSSRLVSS) the composition is skewed to low complexity. Gly residues predominate over residues 423 to 432 (SGGGGSGSGN).

The protein belongs to the protein kinase superfamily. CK1 Ser/Thr protein kinase family. Casein kinase I subfamily. As to quaternary structure, monomer. Post-translationally, autophosphorylated.

The protein localises to the cytoplasm. The catalysed reaction is L-seryl-[protein] + ATP = O-phospho-L-seryl-[protein] + ADP + H(+). The enzyme catalyses L-threonyl-[protein] + ATP = O-phospho-L-threonyl-[protein] + ADP + H(+). Functionally, casein kinases are operationally defined by their preferential utilization of acidic proteins such as caseins as substrates. It can phosphorylate a large number of proteins. The sequence is that of Casein kinase 1-like protein 7 from Arabidopsis thaliana (Mouse-ear cress).